A 486-amino-acid polypeptide reads, in one-letter code: UDP-N-acetylmuramate--L-alanine ligase (486 aa).

123-129 (GTHGKTT) is an ATP binding site.

This sequence belongs to the MurCDEF family.

The protein resides in the cytoplasm. The enzyme catalyses UDP-N-acetyl-alpha-D-muramate + L-alanine + ATP = UDP-N-acetyl-alpha-D-muramoyl-L-alanine + ADP + phosphate + H(+). It participates in cell wall biogenesis; peptidoglycan biosynthesis. In terms of biological role, cell wall formation. In Pseudomonas savastanoi pv. phaseolicola (strain 1448A / Race 6) (Pseudomonas syringae pv. phaseolicola (strain 1448A / Race 6)), this protein is UDP-N-acetylmuramate--L-alanine ligase.